The following is a 299-amino-acid chain: Mycothiol acetyltransferase (299 aa).

2 N-acetyltransferase domains span residues 1–156 and 149–299; these read MGWT…TYRG and VTMR…ARAL. E33 lines the 1D-myo-inositol 2-(L-cysteinylamino)-2-deoxy-alpha-D-glucopyranoside pocket. Acetyl-CoA-binding positions include 75–77 and 83–88; these read LVV and RRGIGT. Residues E176, K218, and E231 each coordinate 1D-myo-inositol 2-(L-cysteinylamino)-2-deoxy-alpha-D-glucopyranoside. Residues 235–237 and 242–248 each bind acetyl-CoA; these read VGI and QGRGLGR. Y269 lines the 1D-myo-inositol 2-(L-cysteinylamino)-2-deoxy-alpha-D-glucopyranoside pocket. 274-279 is an acetyl-CoA binding site; sequence NTAALH.

It belongs to the acetyltransferase family. MshD subfamily. Monomer.

It catalyses the reaction 1D-myo-inositol 2-(L-cysteinylamino)-2-deoxy-alpha-D-glucopyranoside + acetyl-CoA = mycothiol + CoA + H(+). In terms of biological role, catalyzes the transfer of acetyl from acetyl-CoA to desacetylmycothiol (Cys-GlcN-Ins) to form mycothiol. This chain is Mycothiol acetyltransferase, found in Rhodococcus erythropolis (strain PR4 / NBRC 100887).